Here is a 309-residue protein sequence, read N- to C-terminus: Ribosomal RNA small subunit methyltransferase H (309 aa).

Residues 30–32 (GGH), Asp50, Phe74, Asp96, and Gln103 each bind S-adenosyl-L-methionine.

This sequence belongs to the methyltransferase superfamily. RsmH family.

The protein resides in the cytoplasm. The enzyme catalyses cytidine(1402) in 16S rRNA + S-adenosyl-L-methionine = N(4)-methylcytidine(1402) in 16S rRNA + S-adenosyl-L-homocysteine + H(+). In terms of biological role, specifically methylates the N4 position of cytidine in position 1402 (C1402) of 16S rRNA. The chain is Ribosomal RNA small subunit methyltransferase H from Wigglesworthia glossinidia brevipalpis.